The following is a 634-amino-acid chain: Threonine--tRNA ligase (634 aa).

Residues 1–142 (MQLLLIHSDY…LSRSIRPEGA (142 aa)) form an editing domain region. The segment at 214–513 (PHVELMRRLE…TEEGKVPMLP (300 aa)) is catalytic. Zn(2+) contacts are provided by Cys306, His358, and His482.

The protein belongs to the class-II aminoacyl-tRNA synthetase family. Homodimer. It depends on Zn(2+) as a cofactor.

Its subcellular location is the cytoplasm. It catalyses the reaction tRNA(Thr) + L-threonine + ATP = L-threonyl-tRNA(Thr) + AMP + diphosphate + H(+). Its function is as follows. Catalyzes the attachment of threonine to tRNA(Thr) in a two-step reaction: L-threonine is first activated by ATP to form Thr-AMP and then transferred to the acceptor end of tRNA(Thr). Edits incorrectly charged L-seryl-tRNA(Thr) probably via its editing domain (tested with total bovine tRNA). Activates L-serine, but does not detectably transfer it to tRNA (tested with total bovine tRNA). The sequence is that of Threonine--tRNA ligase from Methanosarcina mazei (strain ATCC BAA-159 / DSM 3647 / Goe1 / Go1 / JCM 11833 / OCM 88) (Methanosarcina frisia).